The sequence spans 151 residues: 3-hydroxyacyl-[acyl-carrier-protein] dehydratase FabZ (151 aa).

The active site involves His56.

Belongs to the thioester dehydratase family. FabZ subfamily.

The protein resides in the cytoplasm. It carries out the reaction a (3R)-hydroxyacyl-[ACP] = a (2E)-enoyl-[ACP] + H2O. Involved in unsaturated fatty acids biosynthesis. Catalyzes the dehydration of short chain beta-hydroxyacyl-ACPs and long chain saturated and unsaturated beta-hydroxyacyl-ACPs. The sequence is that of 3-hydroxyacyl-[acyl-carrier-protein] dehydratase FabZ from Rhodopseudomonas palustris (strain ATCC BAA-98 / CGA009).